The following is a 316-amino-acid chain: Transaldolase (316 aa).

Catalysis depends on lysine 132, which acts as the Schiff-base intermediate with substrate.

This sequence belongs to the transaldolase family. Type 1 subfamily. In terms of assembly, homodimer.

It is found in the cytoplasm. The catalysed reaction is D-sedoheptulose 7-phosphate + D-glyceraldehyde 3-phosphate = D-erythrose 4-phosphate + beta-D-fructose 6-phosphate. It participates in carbohydrate degradation; pentose phosphate pathway; D-glyceraldehyde 3-phosphate and beta-D-fructose 6-phosphate from D-ribose 5-phosphate and D-xylulose 5-phosphate (non-oxidative stage): step 2/3. In terms of biological role, transaldolase is important for the balance of metabolites in the pentose-phosphate pathway. The sequence is that of Transaldolase from Methylobacillus flagellatus (strain ATCC 51484 / DSM 6875 / VKM B-1610 / KT).